A 166-amino-acid polypeptide reads, in one-letter code: Transcription antitermination protein NusB (166 aa).

Residues 1 to 18 (MISDESDRFNPRDPKPAD) show a composition bias toward basic and acidic residues. The interval 1–30 (MISDESDRFNPRDPKPADAGKPSKSAKRRE) is disordered.

The protein belongs to the NusB family.

In terms of biological role, involved in transcription antitermination. Required for transcription of ribosomal RNA (rRNA) genes. Binds specifically to the boxA antiterminator sequence of the ribosomal RNA (rrn) operons. This Pseudomonas entomophila (strain L48) protein is Transcription antitermination protein NusB.